We begin with the raw amino-acid sequence, 360 residues long: Cell division protein DivIB (360 aa).

Positions 1-54 (MTEKDSNVEESVLEVEQASQVELDSEQISPAEKESVLAEEKEFSTDVDIPEMTA) are disordered. Over 1 to 139 (MTEKDSNVEE…VDIPSKVVWK (139 aa)) the chain is Cytoplasmic. Over residues 17–28 (QASQVELDSEQI) the composition is skewed to polar residues. Positions 31-44 (AEKESVLAEEKEFS) are enriched in basic and acidic residues. A helical membrane pass occupies residues 140–160 (AIPVLVTSLLLAALALYFISP). At 161–360 (TSKKKQIEVV…MEVGIYRYAS (200 aa)) the chain is on the extracellular side. A POTRA domain is found at 162 to 233 (SKKKQIEVVG…ATFTIHIKEY (72 aa)).

Belongs to the FtsQ/DivIB family. DivIB subfamily.

It is found in the cell membrane. In terms of biological role, cell division protein that may be involved in stabilizing or promoting the assembly of the division complex. The polypeptide is Cell division protein DivIB (Streptococcus suis (strain GZ1)).